We begin with the raw amino-acid sequence, 120 residues long: Fumarate reductase subunit D (120 aa).

3 helical membrane-spanning segments follow: residues 25–45, 55–75, and 100–120; these read FAMLTPVTILVLGILVPLGVI, VAGFVTSIIGALFVIGSISMP, and IACYAAAALATVLSVVFIFMI.

It belongs to the FrdD family. Part of an enzyme complex containing four subunits: a flavoprotein (FrdA), an iron-sulfur protein (FrdB), and two hydrophobic anchor proteins (FrdC and FrdD).

The protein localises to the cell inner membrane. In terms of biological role, anchors the catalytic components of the fumarate reductase complex to the cell membrane, binds quinones. In Aliivibrio fischeri (strain MJ11) (Vibrio fischeri), this protein is Fumarate reductase subunit D.